Here is a 65-residue protein sequence, read N- to C-terminus: Large ribosomal subunit protein bL35 (65 aa).

Basic residues-rich tracts occupy residues 1 to 15 (MPKM…KRFT) and 26 to 44 (QAFK…KRQL). The tract at residues 1 to 65 (MPKMKTKKSA…KSVRAMMPYA (65 aa)) is disordered.

The protein belongs to the bacterial ribosomal protein bL35 family.

This chain is Large ribosomal subunit protein bL35, found in Ralstonia nicotianae (strain ATCC BAA-1114 / GMI1000) (Ralstonia solanacearum).